A 170-amino-acid polypeptide reads, in one-letter code: Small ribosomal subunit protein uS5 (170 aa).

Positions 12 to 75 (LSELLVSVRR…NAAKKSMIRV (64 aa)) constitute an S5 DRBM domain.

This sequence belongs to the universal ribosomal protein uS5 family. As to quaternary structure, part of the 30S ribosomal subunit. Contacts proteins S4 and S8.

Its function is as follows. With S4 and S12 plays an important role in translational accuracy. Functionally, located at the back of the 30S subunit body where it stabilizes the conformation of the head with respect to the body. The chain is Small ribosomal subunit protein uS5 from Wolbachia pipientis wMel.